An 841-amino-acid polypeptide reads, in one-letter code: MSWFGRATSDAPVATISQVELDNKIVEATSESIPNGEIDLSIAFEITDLIRSKKISNKIAMRSLKKRLTLIYLNPNLLLSSLKLIDLCIKNCGFGFLIEISSKEFMDYLIDFIFKIHYNTKELTYGHGGGDVGNKIKIGEMILKYLQNWKIIFENQQQLQYVEKKYQELKNQGFEFPDNNNNSGENDDFNDQVTQLNSKFVVDSEVPPDWVDNEECMICYSPFSMLNRKHHCRACGGVFCQTHSSNNIPLVNLGIMEPVRVCDNCFAKYDKSKKHSRNTSSSGDYNHQSRSIQNDYGGTHGSRRQGNNNDDDNDEEEQIRKAIELSLKESGAGGSGSGGPNSIPSQSRPSAQPPIDREPESETGNADDDEDAEMKAAIAASLKEYETEKSRQSQYQQIQPVQSTQSTQPESDLYNISFPTFSSTSNYPQPQFTASQPPPQQQQQQQAQQQAPSQDLSQAEEEQINLFITLMNSIKNDSRKQKDIMYDTNLNELYGKVIKLRPKLNKSLRNSIEKYETFLEMNNKISTITRLYDQFLEQKLNMAYGNHHISTQFTGVPQQQQEGQFTGSQQQQQQQQPHLPAQGTGYPRYGGSDTNVAQQQQQPPISPNEFYNNLPQHTGFQNYPSYPQNQGTAPDNSYLSQQPSGASTRQKQQQPPIQTYPNQLQPSEPDFEDDDNEEPVNTPQIRVAHNRTSSGSCPLYPTNDIIPDPYSANTNKSTTPNSDDHNYVAVSLPHYPPPEDLSNELPPQQHYVRRASSSLPPNAYEDASLKYPTLENVEHDYDKKKNQEQQQSVNESDFPDVSKVSQFNNRGEEDEGRRNSGASGASSNKKFVVEPEPLIEL.

Residues 30 to 177 (SESIPNGEID…ELKNQGFEFP (148 aa)) form the VHS domain. An FYVE-type; atypical zinc finger spans residues 210–270 (WVDNEECMIC…VCDNCFAKYD (61 aa)). 8 residues coordinate Zn(2+): cysteine 216, cysteine 219, cysteine 232, cysteine 235, cysteine 240, histidine 243, cysteine 262, and cysteine 265. Disordered stretches follow at residues 273–317 (KKHS…DEEE), 329–371 (ESGA…DDED), 384–459 (EYET…LSQA), and 558–841 (QQQQ…LIEL). The segment covering 278–296 (NTSSSGDYNHQSRSIQNDY) has biased composition (polar residues). 2 consecutive UIM domains span residues 314-333 (DEEE…SGAG) and 369-388 (DEDA…YETE). Residues 361–371 (SETGNADDDED) show a composition bias toward acidic residues. The segment covering 392-411 (QSQYQQIQPVQSTQSTQPES) has biased composition (low complexity). Residues 417–427 (SFPTFSSTSNY) are compositionally biased toward polar residues. 2 stretches are compositionally biased toward low complexity: residues 428–457 (PQPQ…QDLS) and 558–584 (QQQQ…AQGT). Residues 592 to 665 (SDTNVAQQQQ…PIQTYPNQLQ (74 aa)) show a composition bias toward polar residues. Over residues 669–678 (PDFEDDDNEE) the composition is skewed to acidic residues. The segment covering 711 to 721 (SANTNKSTTPN) has biased composition (polar residues). Residues 776–787 (NVEHDYDKKKNQ) are compositionally biased toward basic and acidic residues. The span at 819–830 (NSGASGASSNKK) shows a compositional bias: low complexity.

This sequence belongs to the VPS27 family. In terms of assembly, component of the ESCRT-0 complex composed of HSE1 and VPS27.

The protein resides in the endosome membrane. In terms of biological role, component of the ESCRT-0 complex which is the sorting receptor for ubiquitinated cargo proteins at the multivesicular body (MVB) and recruits ESCRT-I to the MVB outer membrane. The chain is Vacuolar protein sorting-associated protein 27 (VPS27) from Candida albicans (strain SC5314 / ATCC MYA-2876) (Yeast).